Reading from the N-terminus, the 234-residue chain is MFKGILLCVLFAVLSANPLSQPEGFADEEERDVRGLASLLGKALKAALKIGANALGGSPQQREANDERRFADGQQDYTGWMDFGRRDDEDDVNERDVRGFGSFLGKALKAGLKIGTHFLGGAPQQREANDERRFADGQQDYTGWMDFGRRDGQQDYTGWMDFGRRDDEDDVHERDVRGFGSFLGKALKAALKIGANALGGSPQQREANDERRFADGQQDYTGWMDFGRRNGEDD.

The first 26 residues, 1-26, serve as a signal peptide directing secretion; sequence MFKGILLCVLFAVLSANPLSQPEGFA. A propeptide spanning residues 27–73 is cleaved from the precursor; it reads DEEERDVRGLASLLGKALKAALKIGANALGGSPQQREANDERRFADG. At Y77 the chain carries Sulfotyrosine. A Phenylalanine amide modification is found at F83. Residues 87–137 constitute a propeptide that is removed on maturation; sequence DDEDDVNERDVRGFGSFLGKALKAGLKIGTHFLGGAPQQREANDERRFADG. Position 141 is a sulfotyrosine (Y141). The residue at position 147 (F147) is a Phenylalanine amide. The propeptide occupies 151–152; it reads DG. Y156 carries the post-translational modification Sulfotyrosine. The residue at position 162 (F162) is a Phenylalanine amide. The propeptide occupies 166 to 216; the sequence is DDEDDVHERDVRGFGSFLGKALKAALKIGANALGGSPQQREANDERRFADG. The segment at 198–234 is disordered; the sequence is LGGSPQQREANDERRFADGQQDYTGWMDFGRRNGEDD. Position 220 is a sulfotyrosine (Y220). F226 carries the phenylalanine amide modification. Residues 230-234 constitute a propeptide that is removed on maturation; it reads NGEDD.

The protein belongs to the gastrin/cholecystokinin family. As to expression, expressed by the skin glands.

It localises to the secreted. The pharmacological activities of caerulein are quite similar to the physiological activities of gastrin and related peptides. The chain is Preprocaerulein type-4 from Xenopus borealis (Kenyan clawed frog).